Reading from the N-terminus, the 103-residue chain is Leukocyte cysteine proteinase inhibitor 1 (103 aa).

Position 1 is a blocked amino end (Met); partial (methionine 1). Residues 1–20 (MESEEMLAGGLTEPRPATPE) form a disordered region. Residues 51 to 55 (QVVAG) carry the Secondary area of contact motif.

It belongs to the cystatin family.

Its subcellular location is the cytoplasm. Its function is as follows. Potent inhibitor of cathepsins L and S, and papain. This Sus scrofa (Pig) protein is Leukocyte cysteine proteinase inhibitor 1.